The following is a 408-amino-acid chain: E3 ubiquitin-protein ligase IE2 (408 aa).

Residues 1–10 (MSRQINAATP) show a composition bias toward polar residues. Disordered regions lie at residues 1-67 (MSRQ…ENVQ) and 176-199 (QSPD…QSEP). The segment covering 13 to 25 (SRRHRLSLSRRRI) has biased composition (basic residues). Residues 30–47 (SPEAQPSSSSRSQPSSSS) show a composition bias toward low complexity. 4 tandem repeats follow at residues 34 to 41 (QPSSSSRS), 42 to 49 (QPSSSSRS), 51 to 54 (RRQE), and 55 to 58 (RRQE). The interval 34–49 (QPSSSSRSQPSSSSRS) is 2 X 8 AA tandem repeats of Q-P-S-S-S-S-R-S. The interval 51-58 (RRQERRQE) is 2 X 4 AA tandem repeats of R-R-Q-E. A compositionally biased stretch (low complexity) spans 183–197 (SPQSPQPQQQQQQQS). The RING-type zinc-finger motif lies at 207–255 (CNICFTTFKDTKNVNSSFVTSIHCNHAVCFKCYVKIIMDNSVYKCFCSA).

This sequence belongs to the alphabaculovirus IE2 protein family. As to quaternary structure, homooligomer. Post-translationally, auto-ubiquitinated.

Its subcellular location is the host nucleus. It catalyses the reaction S-ubiquitinyl-[E2 ubiquitin-conjugating enzyme]-L-cysteine + [acceptor protein]-L-lysine = [E2 ubiquitin-conjugating enzyme]-L-cysteine + N(6)-ubiquitinyl-[acceptor protein]-L-lysine.. RING-finger E3 ubiquitin ligase that plays an important regulatory role during the initial stages of infection. Migrates to specific nuclear foci early in infection supposely to prepare the sites for viral transcription and replication by targeting and ubiquitinating host proteins. Acts as a transcriptional activator and activates a number of viral promoters including itself, IE1 and the promoter of 39K gene. This Lepidoptera (butterflies and moths) protein is E3 ubiquitin-protein ligase IE2 (IE2).